Here is a 292-residue protein sequence, read N- to C-terminus: Protease HtpX (292 aa).

2 consecutive transmembrane segments (helical) span residues 4–24 (IALF…VLSL) and 34–54 (GLMI…LLMS). Position 139 (His-139) interacts with Zn(2+). The active site involves Glu-140. His-143 provides a ligand contact to Zn(2+). The next 2 membrane-spanning stretches (helical) occupy residues 158-178 (IVNT…AGFL) and 192-212 (MIYF…ASII). Glu-221 contacts Zn(2+).

Belongs to the peptidase M48B family. The cofactor is Zn(2+).

Its subcellular location is the cell inner membrane. This Serratia proteamaculans (strain 568) protein is Protease HtpX.